Reading from the N-terminus, the 660-residue chain is MKTVVFAYHDMGCLGIEALLAAGYEISAIFTHTDNPGEKAFYGSVAHLAAERGIPVYAPDNVNHPLWVERIAQLSPEVIFSFYYRHLICDEILQLAPAGAFNLHGSLLPKYRGRAPLNWVLVNGETETGVTLHRMVKRADAGAIVAQLRVAIAPDDIAITLHHKLCHAARQLLEQTLPAIKHGNILEIAQRENEATCFGRRTPDDSFLEWHKPASVLHNMVRAVADPWPGAFSYVGNQKFTVWSSRVHPHASKAQPGSVISIAPLLIACGDGALEIVTGQAGDGITMQGSQLAQTLGLVQGSRLNSQPACTARRRTRVLILGVNGFIGNHLTERLLREDHYEVYGLDIGSDAISRFLNHPHFHFVEGDISIHSEWIEYHVKKCDVVLPLVAIATPIEYTRNPLRVFELDFEENLRIIRYCVKYRKRIIFPSTSEVYGMCSDKYFDEDHSNLIVGPVNKPRWIYSVSKQLLDRVIWAYGEKEGLQFTLFRPFNWMGPRLDNLNAARIGSSRAITQLILNLVEGSPIKLIDGGKQKRCFTDIRDGIEALYRIIENAGNRCDGEIINIGNPENEASIEELGEMLLASFEKHPLRHHFPPFAGFRVVESSSYYGKGYQDVEHRKPSIRNAHRCLDWEPKIDMQETIDETLDFFLRTVDLTDKPS.

The interval 1 to 304 is formyltransferase ArnAFT; it reads MKTVVFAYHD…TLGLVQGSRL (304 aa). 86 to 88 is a binding site for (6R)-10-formyltetrahydrofolate; that stretch reads HLI. Residue H104 is the Proton donor; for formyltransferase activity of the active site. (6R)-10-formyltetrahydrofolate is bound by residues R114 and 136–140; that span reads VKRAD. Residues 314–660 are dehydrogenase ArnADH; sequence RRTRVLILGV…RTVDLTDKPS (347 aa). Residues D347 and 368-369 contribute to the NAD(+) site; that span reads DI. UDP-alpha-D-glucuronate is bound by residues A393, Y398, and 432-433; that span reads TS. Catalysis depends on E434, which acts as the Proton acceptor; for decarboxylase activity. UDP-alpha-D-glucuronate contacts are provided by residues R460, N492, 526-535, and Y613; that span reads KLIDGGKQKR. The active-site Proton donor; for decarboxylase activity is R619.

The protein in the N-terminal section; belongs to the Fmt family. UDP-L-Ara4N formyltransferase subfamily. This sequence in the C-terminal section; belongs to the NAD(P)-dependent epimerase/dehydratase family. UDP-glucuronic acid decarboxylase subfamily. As to quaternary structure, homohexamer, formed by a dimer of trimers.

The catalysed reaction is UDP-alpha-D-glucuronate + NAD(+) = UDP-beta-L-threo-pentopyranos-4-ulose + CO2 + NADH. It catalyses the reaction UDP-4-amino-4-deoxy-beta-L-arabinose + (6R)-10-formyltetrahydrofolate = UDP-4-deoxy-4-formamido-beta-L-arabinose + (6S)-5,6,7,8-tetrahydrofolate + H(+). It functions in the pathway nucleotide-sugar biosynthesis; UDP-4-deoxy-4-formamido-beta-L-arabinose biosynthesis; UDP-4-deoxy-4-formamido-beta-L-arabinose from UDP-alpha-D-glucuronate: step 1/3. It participates in nucleotide-sugar biosynthesis; UDP-4-deoxy-4-formamido-beta-L-arabinose biosynthesis; UDP-4-deoxy-4-formamido-beta-L-arabinose from UDP-alpha-D-glucuronate: step 3/3. The protein operates within bacterial outer membrane biogenesis; lipopolysaccharide biosynthesis. In terms of biological role, bifunctional enzyme that catalyzes the oxidative decarboxylation of UDP-glucuronic acid (UDP-GlcUA) to UDP-4-keto-arabinose (UDP-Ara4O) and the addition of a formyl group to UDP-4-amino-4-deoxy-L-arabinose (UDP-L-Ara4N) to form UDP-L-4-formamido-arabinose (UDP-L-Ara4FN). The modified arabinose is attached to lipid A and is required for resistance to polymyxin and cationic antimicrobial peptides. The chain is Bifunctional polymyxin resistance protein ArnA from Escherichia coli O9:H4 (strain HS).